A 274-amino-acid chain; its full sequence is tRNA-cytidine(32) 2-sulfurtransferase (274 aa).

Residues 40–45 carry the PP-loop motif motif; sequence SGGKDS. Positions 115, 118, and 206 each coordinate [4Fe-4S] cluster.

This sequence belongs to the TtcA family. In terms of assembly, homodimer. The cofactor is Mg(2+). Requires [4Fe-4S] cluster as cofactor.

Its subcellular location is the cytoplasm. The enzyme catalyses cytidine(32) in tRNA + S-sulfanyl-L-cysteinyl-[cysteine desulfurase] + AH2 + ATP = 2-thiocytidine(32) in tRNA + L-cysteinyl-[cysteine desulfurase] + A + AMP + diphosphate + H(+). It functions in the pathway tRNA modification. Functionally, catalyzes the ATP-dependent 2-thiolation of cytidine in position 32 of tRNA, to form 2-thiocytidine (s(2)C32). The sulfur atoms are provided by the cysteine/cysteine desulfurase (IscS) system. The polypeptide is tRNA-cytidine(32) 2-sulfurtransferase (Pseudomonas aeruginosa (strain LESB58)).